The sequence spans 262 residues: Serine/arginine-rich SC35-like splicing factor SCL30 (262 aa).

Residues 1 to 14 (MRRYSPPYYSPPRR) are compositionally biased toward low complexity. Disordered stretches follow at residues 1–48 (MRRY…SHGS) and 123–262 (ASES…VSPR). S5, S10, and S22 each carry phosphoserine. The span at 31 to 42 (GYGGGGGGGGRR) shows a compositional bias: gly residues. The 79-residue stretch at 47–125 (GSLLVRNIPL…REITVVVASE (79 aa)) folds into the RRM domain. The segment covering 125–152 (ESRKRPEEMRVKTRTRSREPSGSRDRSH) has biased composition (basic and acidic residues). Basic residues predominate over residues 153–167 (GRSRSRSISRSRSPR). S182, S204, and S206 each carry phosphoserine. At Y209 the chain carries Phosphotyrosine. Residues 217-239 (PDRDRNGDNEIREKPGYEAEDRR) show a composition bias toward basic and acidic residues. Positions 243–262 (RAVSRSPSGSRSRSVEVSPR) are enriched in low complexity. Phosphoserine is present on residues S254, S256, and S260.

Belongs to the splicing factor SR family. SCL subfamily. In terms of assembly, component of the spliceosome. Interacts with RS2Z33, CYP59, CYP63 and CYP95. Post-translationally, phosphorylated.

It localises to the nucleus speckle. Its function is as follows. Involved in intron recognition and spliceosome assembly. Probably active at the 5' splice sites. The chain is Serine/arginine-rich SC35-like splicing factor SCL30 (SCL30) from Arabidopsis thaliana (Mouse-ear cress).